The chain runs to 1073 residues: Semaphorin-6D (1073 aa).

Residues 1–20 form the signal peptide; the sequence is MRVFLLCAYILLLMVSQLRA. The Extracellular segment spans residues 21–662; sequence VSFPEDDEPL…GESNQMVHMN (642 aa). The Sema domain maps to 27–512; sequence DEPLNTVDYH…FSSCIIRIPL (486 aa). Asn-51 is a glycosylation site (N-linked (GlcNAc...) asparagine). 4 disulfide bridges follow: Cys-108-Cys-118, Cys-136-Cys-145, Cys-259-Cys-370, and Cys-284-Cys-329. Asn-283 is a glycosylation site (N-linked (GlcNAc...) asparagine). N-linked (GlcNAc...) asparagine glycans are attached at residues Asn-435 and Asn-461. Intrachain disulfides connect Cys-477–Cys-506, Cys-515–Cys-533, Cys-521–Cys-568, and Cys-525–Cys-541. Residues 514–569 enclose the PSI domain; that stretch reads RCERYGSCKKSCIASRDPYCGWLSQGSCGRVTPGMLAEGYEQDTEFGNTAHLGDCH. Asn-631 is a glycosylation site (N-linked (GlcNAc...) asparagine). Residues 663–683 form a helical membrane-spanning segment; sequence VLITCVFAAFVLGAFIAGVAV. Over 684-1073 the chain is Cytoplasmic; it reads YCYRDMFVRK…SVRPLNKYTY (390 aa). Ser-723, Ser-734, and Ser-744 each carry phosphoserine. Disordered stretches follow at residues 744–775, 787–825, 839–874, 914–1005, and 1021–1073; these read SRKE…PTPE, AMKS…GHIP, TSFS…RSVD, SMSE…PTPT, and LQPS…KYTY. Thr-773 carries the post-translational modification Phosphothreonine. A compositionally biased stretch (basic and acidic residues) spans 790–805; sequence SHSEKAHGHGASRKET. Phosphoserine is present on residues Ser-931, Ser-957, and Ser-983. A compositionally biased stretch (polar residues) spans 931-942; sequence SPPSTLPRNSPT. Composition is skewed to polar residues over residues 980–995 and 1021–1037; these read NLNS…QPSM and LQPS…NGTL.

The protein belongs to the semaphorin family.

It localises to the cell membrane. Its subcellular location is the cytoplasm. Shows growth cone collapsing activity on dorsal root ganglion (DRG) neurons in vitro. May be a stop signal for the DRG neurons in their target areas, and possibly also for other neurons. May also be involved in the maintenance and remodeling of neuronal connections. Ligand of TREM2 with PLXNA1 as coreceptor in dendritic cells, plays a role in the generation of immune responses and skeletal homeostasis. The sequence is that of Semaphorin-6D from Homo sapiens (Human).